The following is a 186-amino-acid chain: Large ribosomal subunit protein uL6 (186 aa).

The protein belongs to the universal ribosomal protein uL6 family. In terms of assembly, part of the 50S ribosomal subunit.

Functionally, this protein binds to the 23S rRNA, and is important in its secondary structure. It is located near the subunit interface in the base of the L7/L12 stalk, and near the tRNA binding site of the peptidyltransferase center. In Sulfurisphaera tokodaii (strain DSM 16993 / JCM 10545 / NBRC 100140 / 7) (Sulfolobus tokodaii), this protein is Large ribosomal subunit protein uL6.